We begin with the raw amino-acid sequence, 400 residues long: Formate-dependent phosphoribosylglycinamide formyltransferase (400 aa).

N(1)-(5-phospho-beta-D-ribosyl)glycinamide-binding positions include 22-23 (EL) and E82. ATP is bound by residues R115, K156, 161–166 (SSGKGQ), 196–199 (EGFI), and E204. The region spanning 120–309 (RLAAETLCLP…EFALHARAIL (190 aa)) is the ATP-grasp domain. Mg(2+)-binding residues include E268 and E280. N(1)-(5-phospho-beta-D-ribosyl)glycinamide-binding positions include D287, K361, and 368 to 369 (RR).

The protein belongs to the PurK/PurT family. In terms of assembly, homodimer.

It carries out the reaction N(1)-(5-phospho-beta-D-ribosyl)glycinamide + formate + ATP = N(2)-formyl-N(1)-(5-phospho-beta-D-ribosyl)glycinamide + ADP + phosphate + H(+). The protein operates within purine metabolism; IMP biosynthesis via de novo pathway; N(2)-formyl-N(1)-(5-phospho-D-ribosyl)glycinamide from N(1)-(5-phospho-D-ribosyl)glycinamide (formate route): step 1/1. Involved in the de novo purine biosynthesis. Catalyzes the transfer of formate to 5-phospho-ribosyl-glycinamide (GAR), producing 5-phospho-ribosyl-N-formylglycinamide (FGAR). Formate is provided by PurU via hydrolysis of 10-formyl-tetrahydrofolate. The protein is Formate-dependent phosphoribosylglycinamide formyltransferase of Xanthomonas euvesicatoria pv. vesicatoria (strain 85-10) (Xanthomonas campestris pv. vesicatoria).